The sequence spans 339 residues: Dihydroorotate dehydrogenase (quinone) (339 aa).

Residues 64 to 68 (AGADK) and threonine 88 each bind FMN. Lysine 68 provides a ligand contact to substrate. 113 to 117 (NRNGF) contributes to the substrate binding site. Residues asparagine 141 and asparagine 174 each contribute to the FMN site. Substrate is bound at residue asparagine 174. Serine 177 (nucleophile) is an active-site residue. Asparagine 179 serves as a coordination point for substrate. 2 residues coordinate FMN: lysine 219 and threonine 247. 248-249 (NT) contributes to the substrate binding site. FMN-binding positions include glycine 270, glycine 299, and 320 to 321 (YS).

It belongs to the dihydroorotate dehydrogenase family. Type 2 subfamily. As to quaternary structure, monomer. FMN serves as cofactor.

It is found in the cell membrane. It catalyses the reaction (S)-dihydroorotate + a quinone = orotate + a quinol. It functions in the pathway pyrimidine metabolism; UMP biosynthesis via de novo pathway; orotate from (S)-dihydroorotate (quinone route): step 1/1. Catalyzes the conversion of dihydroorotate to orotate with quinone as electron acceptor. The protein is Dihydroorotate dehydrogenase (quinone) of Haemophilus influenzae (strain PittGG).